Here is an 82-residue protein sequence, read N- to C-terminus: Penaeidin-3g (82 aa).

Residues 1 to 19 (MRLVVCLVFLASFALVCQG) form the signal peptide. Glutamine 20 is modified (pyrrolidone carboxylic acid). 3 cysteine pairs are disulfide-bonded: cysteine 51–cysteine 66, cysteine 55–cysteine 73, and cysteine 67–cysteine 74. Serine 81 is subject to Serine amide.

This sequence belongs to the penaeidin family.

It is found in the cytoplasmic granule. In terms of biological role, antibacterial and antifungal activity. Presents chitin-binding activity. In Penaeus vannamei (Whiteleg shrimp), this protein is Penaeidin-3g.